Reading from the N-terminus, the 604-residue chain is Sulfite reductase [NADPH] flavoprotein alpha-component (604 aa).

The 139-residue stretch at 65–203 folds into the Flavodoxin-like domain; it reads VTILYGSQTG…AAGQWHADVL (139 aa). FMN is bound by residues 71–76, 118–121, and 154–163; these read SQTGNG, STHG, and LGDSSYEFFC. One can recognise an FAD-binding FR-type domain in the interval 236-453; it reads QNPYSAEVLV…VEPNKHFRLP (218 aa). FAD-binding positions include Thr-324, Leu-358, 392-395, 410-412, and 425-428; these read RLYS, TVA, and GGAS. NADP(+) is bound by residues 524 to 525, 530 to 534, and Asp-566; these read SR and KIYVQ. FAD is bound at residue Tyr-604.

The protein belongs to the NADPH-dependent sulphite reductase flavoprotein subunit CysJ family. It in the N-terminal section; belongs to the flavodoxin family. In the C-terminal section; belongs to the flavoprotein pyridine nucleotide cytochrome reductase family. Alpha(8)-beta(8). The alpha component is a flavoprotein, the beta component is a hemoprotein. The cofactor is FAD. FMN is required as a cofactor.

The catalysed reaction is hydrogen sulfide + 3 NADP(+) + 3 H2O = sulfite + 3 NADPH + 4 H(+). The protein operates within sulfur metabolism; hydrogen sulfide biosynthesis; hydrogen sulfide from sulfite (NADPH route): step 1/1. Its function is as follows. Component of the sulfite reductase complex that catalyzes the 6-electron reduction of sulfite to sulfide. This is one of several activities required for the biosynthesis of L-cysteine from sulfate. The flavoprotein component catalyzes the electron flow from NADPH -&gt; FAD -&gt; FMN to the hemoprotein component. The chain is Sulfite reductase [NADPH] flavoprotein alpha-component from Shewanella sp. (strain MR-4).